The primary structure comprises 498 residues: Lysine--tRNA ligase (498 aa).

The Mg(2+) site is built by glutamate 401 and glutamate 408.

It belongs to the class-II aminoacyl-tRNA synthetase family. In terms of assembly, homodimer. Requires Mg(2+) as cofactor.

It localises to the cytoplasm. The enzyme catalyses tRNA(Lys) + L-lysine + ATP = L-lysyl-tRNA(Lys) + AMP + diphosphate. This chain is Lysine--tRNA ligase, found in Dehalococcoides mccartyi (strain CBDB1).